Reading from the N-terminus, the 788-residue chain is Endonuclease MutS2 (788 aa).

ATP is bound at residue 332–339 (GPNTGGKT). Positions 713-788 (VDLRGMDAEE…GTGVTVVELK (76 aa)) constitute a Smr domain.

The protein belongs to the DNA mismatch repair MutS family. MutS2 subfamily. In terms of assembly, homodimer. Binds to stalled ribosomes, contacting rRNA.

Endonuclease that is involved in the suppression of homologous recombination and thus may have a key role in the control of bacterial genetic diversity. In terms of biological role, acts as a ribosome collision sensor, splitting the ribosome into its 2 subunits. Detects stalled/collided 70S ribosomes which it binds and splits by an ATP-hydrolysis driven conformational change. Acts upstream of the ribosome quality control system (RQC), a ribosome-associated complex that mediates the extraction of incompletely synthesized nascent chains from stalled ribosomes and their subsequent degradation. Probably generates substrates for RQC. This chain is Endonuclease MutS2, found in Clostridium botulinum (strain Kyoto / Type A2).